We begin with the raw amino-acid sequence, 325 residues long: UPF0285 protein MmarC6_0247 (325 aa).

The protein belongs to the UPF0285 family.

The chain is UPF0285 protein MmarC6_0247 from Methanococcus maripaludis (strain C6 / ATCC BAA-1332).